We begin with the raw amino-acid sequence, 195 residues long: Endoribonuclease YbeY (195 aa).

Residues histidine 152, histidine 156, and histidine 162 each contribute to the Zn(2+) site.

It belongs to the endoribonuclease YbeY family. Zn(2+) serves as cofactor.

The protein localises to the cytoplasm. In terms of biological role, single strand-specific metallo-endoribonuclease involved in late-stage 70S ribosome quality control and in maturation of the 3' terminus of the 16S rRNA. The protein is Endoribonuclease YbeY of Rhodopseudomonas palustris (strain HaA2).